The chain runs to 250 residues: 2,3-bisphosphoglycerate-dependent phosphoglycerate mutase (250 aa).

Substrate is bound by residues 10–17, 23–24, arginine 62, 89–92, lysine 100, 116–117, and 185–186; these read RHGESQWN, TG, ERHY, RR, and GN. The active-site Tele-phosphohistidine intermediate is histidine 11. Glutamate 89 acts as the Proton donor/acceptor in catalysis.

This sequence belongs to the phosphoglycerate mutase family. BPG-dependent PGAM subfamily. In terms of assembly, homodimer.

It catalyses the reaction (2R)-2-phosphoglycerate = (2R)-3-phosphoglycerate. It functions in the pathway carbohydrate degradation; glycolysis; pyruvate from D-glyceraldehyde 3-phosphate: step 3/5. Its function is as follows. Catalyzes the interconversion of 2-phosphoglycerate and 3-phosphoglycerate. The polypeptide is 2,3-bisphosphoglycerate-dependent phosphoglycerate mutase (Pectobacterium carotovorum subsp. carotovorum (strain PC1)).